Here is an 851-residue protein sequence, read N- to C-terminus: MKPMLKDFSNLLLVVLCDYVLGEAEYLLLQEPVHVALSDRTVSVGFHYLSDVNGTLRNVSVMLWEANTNRTLTTKYLLTNQAQGTLQFECFYFKEAGDYWFVMIPEVTDNGTQVPLWEKSAFLKVEWPVFHIDLNRTAKAAEGTFQVGVFTTQPLCLFPVDKPDMLVDVIFTDRLPEARASLGQPLEIRASKRTKLTQGQWVEFGCAPVGVEAYVTVMLRLLGQDSVIASTGPIDLAQKFGYKLMMAPEVTCESVLEVMVLPPPCVFVQGVLAVYKEAPKRPEERTFQVAENRLPLGERRTVFNCTLFDVGKNKYCFNFGIVKKGHFSAKECMLIQRNIETWGPWQPWSPCSTTCGDAVRERRRLCVTSFPSRPSCSGMSSETSPCSLEECAVFRPPGPSPVSPQDPVKSNNVVTVTGISLCLFIIFATVLITLWRRFGRAPKCSTPVRHNSIHSPGFRKNSDEENICELSEPRGSFSDAGDGPRGSPGDTGIPLTYRCSASAPPEDEASGSESFQSNAQKIIPPLFSYRLAQQQLKEMKKKGLTETTKVYHVSQSPLTDTVVDATASPPLDLECPEEAAASKFRIKSPFLDQPGAGTGERPPSRLDGIVPPPGCAVSPSQTLIQKSQIRSTGGRDGSSERCHSRSSLFRRTASFHETKQSRPFRERSLSALTPRQVPAYSSRMRTWDQMEDRCRPPSRSTHLLPERPEHFQGAGRTSSPLGPLSKSYTVGHPRRKPDPGDRQAGLVAGAEKMEPHRAHRGPSPSHRSASRKQSSPIFLKDSYQKVSQLSPSHFRKDKCQSFPIHPEFAFYDNTSFRLTEAEQRMLDLPGYFGSNEEDETTSTLSVEKLVI.

A signal peptide spans 1 to 24 (MKPMLKDFSNLLLVVLCDYVLGEA). At 25 to 412 (EYLLLQEPVH…SPQDPVKSNN (388 aa)) the chain is on the extracellular side. N-linked (GlcNAc...) asparagine glycans are attached at residues N53, N58, N69, N110, N135, and N304. The TSP type-1 domain maps to 339-392 (IETWGPWQPWSPCSTTCGDAVRERRRLCVTSFPSRPSCSGMSSETSPCSLEECA). Cystine bridges form between C351–C386, C355–C391, and C366–C376. The helical transmembrane segment at 413–433 (VVTVTGISLCLFIIFATVLIT) threads the bilayer. Residues 434–851 (LWRRFGRAPK…STLSVEKLVI (418 aa)) are Cytoplasmic-facing. Phosphoserine is present on S462. 3 disordered regions span residues 471–516 (SEPR…ESFQ), 626–646 (KSQIRSTGGRDGSSERCHSRS), and 682–777 (SRMR…SSPI). The segment covering 685–695 (RTWDQMEDRCR) has biased composition (basic and acidic residues). A compositionally biased stretch (polar residues) spans 765–776 (SHRSASRKQSSP).

As to quaternary structure, part of a complex composed of THSD1, PTK2/FAK1, TLN1 and VCL. Interacts with TLN1. In terms of tissue distribution, expressed in cerebral vascular endothelium.

The protein resides in the endosome membrane. It localises to the cell junction. It is found in the focal adhesion. Is a positive regulator of nascent focal adhesion assembly, involved in the modulation of endothelial cell attachment to the extracellular matrix. In Mus musculus (Mouse), this protein is Thrombospondin type-1 domain-containing protein 1 (Thsd1).